The following is a 136-amino-acid chain: Cancer/testis antigen 62 (136 aa).

The segment at 1–22 (MMHTTSYRRLSPPHLTDQPSAY) is disordered.

In terms of tissue distribution, testis specific. Expressed in cancer cell lines.

The protein is Cancer/testis antigen 62 (CT62) of Homo sapiens (Human).